The sequence spans 348 residues: Rhodopsin (348 aa).

Met1 bears the N-acetylmethionine mark. The Extracellular segment spans residues 1 to 36 (MNGTEGPNFYVPFSNITGVVRSPFEQPQYYLAEPWQ). N-linked (GlcNAc...) asparagine glycans are attached at residues Asn2 and Asn15. A helical transmembrane segment spans residues 37 to 61 (FSMLAAYMFLLIVLGFPINFLTLYV). At 62–73 (TVQHKKLRTPLN) the chain is on the cytoplasmic side. A helical membrane pass occupies residues 74–96 (YILLNLAVADLFMVFGGFTTTLY). The Extracellular portion of the chain corresponds to 97 to 110 (TSLHGYFVFGPTGC). A disulfide bridge connects residues Cys110 and Cys187. The chain crosses the membrane as a helical span at residues 111–133 (NLEGFFATLGGEIGLWSLVVLAI). The 'Ionic lock' involved in activated form stabilization signature appears at 134–136 (ERY). Topologically, residues 134–152 (ERYVVVCKPMSNFRFGENH) are cytoplasmic. Residues 153–173 (AIMGVAFTWVMALACAAPPLV) form a helical membrane-spanning segment. Residues 174–202 (GWSRYIPEGMQCSCGIDYYTLKPEVNNES) are Extracellular-facing. Glu201 is a binding site for Zn(2+). The chain crosses the membrane as a helical span at residues 203 to 224 (FVIYMFVVHFTIPMIVIFFCYG). At 225–252 (QLVFTVKEAAAQQQESATTQKAEKEVTR) the chain is on the cytoplasmic side. A helical membrane pass occupies residues 253 to 274 (MVIIMVIFFLICWLPYASVAMY). Over 275-286 (IFTHQGSNFGPI) the chain is Extracellular. Gln279 is a binding site for Zn(2+). The helical transmembrane segment at 287-308 (FMTLPAFFAKTASIYNPIIYIM) threads the bilayer. An N6-(retinylidene)lysine modification is found at Lys296. Residues 309-348 (MNKQFRNCMLTSLCCGKNPLGDDEASATASKTETSQVAPA) are Cytoplasmic-facing. S-palmitoyl cysteine attachment occurs at residues Cys322 and Cys323. The segment at 330–348 (DDEASATASKTETSQVAPA) is interaction with SAG. At Ser334 the chain carries Phosphoserine. At Thr336 the chain carries Phosphothreonine. Ser338 is subject to Phosphoserine. Phosphothreonine occurs at positions 340 and 342. Ser343 carries the post-translational modification Phosphoserine.

It belongs to the G-protein coupled receptor 1 family. Opsin subfamily. As to quaternary structure, homodimer. May form a complex composed of RHO, GRK1 and RCVRN in a Ca(2+)-dependent manner; RCVRN prevents the interaction between GRK1 and RHO. Interacts with GRK1. Interacts (phosphorylated form) with SAG. Interacts with GNAT1. Interacts with GNAT3. SAG and G-proteins compete for a common binding site. Interacts with PRCD; the interaction promotes PRCD stability. Forms a complex with ASAP1 and ARF4. Forms a complex with ASAP1, RAB11A, Rabin8/RAB3IP, ARF4 and RAB11FIP3; the complex regulates Golgi-to-cilia rhodopsin/RHO transport in photoreceptors. Phosphorylated on some or all of the serine and threonine residues present in the C-terminal region. In terms of processing, contains one covalently linked retinal chromophore. Upon light absorption, the covalently bound 11-cis-retinal is converted to all-trans-retinal. After hydrolysis of the Schiff base and release of the covalently bound all-trans-retinal, active rhodopsin is regenerated by binding of a fresh molecule of 11-cis-retinal.

Its subcellular location is the membrane. The protein localises to the cell projection. The protein resides in the cilium. It is found in the photoreceptor outer segment. In terms of biological role, photoreceptor required for image-forming vision at low light intensity. Required for photoreceptor cell viability after birth. Light-induced isomerization of 11-cis to all-trans retinal triggers a conformational change that activates signaling via G-proteins. Subsequent receptor phosphorylation mediates displacement of the bound G-protein alpha subunit by the arrestin SAG and terminates signaling. This is Rhodopsin (Rho) from Rattus norvegicus (Rat).